Reading from the N-terminus, the 103-residue chain is N(4)-acetylcytidine amidohydrolase (103 aa).

In terms of domain architecture, ASCH spans Ile6 to Lys101. Lys21 (proton acceptor) is an active-site residue. Residue Thr24 is the Nucleophile of the active site. Residue Glu74 is the Proton donor of the active site.

The protein belongs to the N(4)-acetylcytidine amidohydrolase family.

It carries out the reaction N(4)-acetylcytidine + H2O = cytidine + acetate + H(+). It catalyses the reaction N(4)-acetyl-2'-deoxycytidine + H2O = 2'-deoxycytidine + acetate + H(+). The catalysed reaction is N(4)-acetylcytosine + H2O = cytosine + acetate + H(+). Its function is as follows. Catalyzes the hydrolysis of N(4)-acetylcytidine (ac4C). The chain is N(4)-acetylcytidine amidohydrolase (yqfB) from Escherichia coli (strain SE11).